The following is a 312-amino-acid chain: Transcriptional regulator protein Pur-beta (312 aa).

The interval 1 to 32 (MADGDSGSERGGGGGPCGFQPASRGGGEQETQ) is disordered. Residue A2 is modified to N-acetylalanine. Phosphoserine is present on residues S6 and S8. R24 is modified (omega-N-methylarginine). The segment at 28–254 (EQETQELASK…LRVSEVKPSY (227 aa)) is DNA-binding. At T31 the chain carries Phosphothreonine. S101 carries the post-translational modification Phosphoserine. R152 carries the omega-N-methylarginine modification. Residue K267 is modified to N6-acetyllysine. Basic and acidic residues predominate over residues 284-295 (ERQRDKLYERRG). The tract at residues 284–312 (ERQRDKLYERRGGGSGGGEESEGEEVDED) is disordered. Omega-N-methylarginine is present on R294. 2 positions are modified to phosphoserine: S298 and S304. Acidic residues predominate over residues 302–312 (EESEGEEVDED).

It belongs to the PUR DNA-binding protein family. As to quaternary structure, homodimer, heterodimer with PURA and heterotrimer with PURA and YBX1/Y-box protein 1. Interacts with MYOCD and SRF. As to expression, expressed in myocardium of heart failure patients.

The protein localises to the nucleus. Its function is as follows. Transcriptional regulator which can act as an activator or a repressor. Represses the transcription of ACTA2 in fibroblasts and smooth muscle cells via its ability to interact with the purine-rich strand of a MCAT- containing element in the 5' flanking region of the gene. Represses the transcription of MYOCD, capable of repressing all isoforms of MYOCD but the magnitude of the repressive effects is most notable for the SMC- specific isoforms. Promotes hepatic glucose production by activating the transcription of ADCY6, leading to cAMP accumulation, increased PKA activity, CREB activation, and increased transcription of PCK1 and G6PC genes. Has capacity to bind repeated elements in single-stranded DNA such as the purine-rich single strand of the PUR element located upstream of the MYC gene. Participates in transcriptional and translational regulation of alpha-MHC expression in cardiac myocytes by binding to the purine-rich negative regulatory (PNR) element Modulates constitutive liver galectin-3 gene transcription by binding to its promoter. May play a role in the dendritic transport of a subset of mRNAs. In Homo sapiens (Human), this protein is Transcriptional regulator protein Pur-beta (PURB).